Reading from the N-terminus, the 629-residue chain is tRNA uridine 5-carboxymethylaminomethyl modification enzyme MnmG (629 aa).

13 to 18 (GGGHAG) serves as a coordination point for FAD. 273–287 (GPRYCPSIEDKIHRF) serves as a coordination point for NAD(+).

Belongs to the MnmG family. Homodimer. Heterotetramer of two MnmE and two MnmG subunits. Requires FAD as cofactor.

The protein resides in the cytoplasm. In terms of biological role, NAD-binding protein involved in the addition of a carboxymethylaminomethyl (cmnm) group at the wobble position (U34) of certain tRNAs, forming tRNA-cmnm(5)s(2)U34. In Shewanella amazonensis (strain ATCC BAA-1098 / SB2B), this protein is tRNA uridine 5-carboxymethylaminomethyl modification enzyme MnmG.